The primary structure comprises 335 residues: Glyceraldehyde-3-phosphate dehydrogenase (335 aa).

Residues 12-13 (RI), Asp34, Arg78, and Ser120 each bind NAD(+). Residues 151–153 (SCT) and Thr182 contribute to the D-glyceraldehyde 3-phosphate site. Catalysis depends on Cys152, which acts as the Nucleophile. NAD(+) is bound at residue Asn183. D-glyceraldehyde 3-phosphate-binding positions include Arg197, 210–211 (TG), and Arg233. Residue Asn315 participates in NAD(+) binding.

This sequence belongs to the glyceraldehyde-3-phosphate dehydrogenase family. Homotetramer.

Its subcellular location is the cytoplasm. It carries out the reaction D-glyceraldehyde 3-phosphate + phosphate + NAD(+) = (2R)-3-phospho-glyceroyl phosphate + NADH + H(+). It participates in carbohydrate degradation; glycolysis; pyruvate from D-glyceraldehyde 3-phosphate: step 1/5. Catalyzes the oxidative phosphorylation of glyceraldehyde 3-phosphate (G3P) to 1,3-bisphosphoglycerate (BPG) using the cofactor NAD. The first reaction step involves the formation of a hemiacetal intermediate between G3P and a cysteine residue, and this hemiacetal intermediate is then oxidized to a thioester, with concomitant reduction of NAD to NADH. The reduced NADH is then exchanged with the second NAD, and the thioester is attacked by a nucleophilic inorganic phosphate to produce BPG. In Priestia megaterium (strain DSM 319 / IMG 1521) (Bacillus megaterium), this protein is Glyceraldehyde-3-phosphate dehydrogenase (gap).